The primary structure comprises 610 residues: Glutamine--fructose-6-phosphate aminotransferase [isomerizing] (610 aa).

Cys-2 (nucleophile; for GATase activity) is an active-site residue. Residues 2 to 219 (CGIVGATSER…EGDVADINRT (218 aa)) enclose the Glutamine amidotransferase type-2 domain. SIS domains lie at 287-427 (AADI…YRGM) and 459-600 (LAQD…VDQP). Catalysis depends on Lys-605, which acts as the For Fru-6P isomerization activity.

In terms of assembly, homodimer.

The protein resides in the cytoplasm. It catalyses the reaction D-fructose 6-phosphate + L-glutamine = D-glucosamine 6-phosphate + L-glutamate. Its function is as follows. Catalyzes the first step in hexosamine metabolism, converting fructose-6P into glucosamine-6P using glutamine as a nitrogen source. In Idiomarina loihiensis (strain ATCC BAA-735 / DSM 15497 / L2-TR), this protein is Glutamine--fructose-6-phosphate aminotransferase [isomerizing].